The primary structure comprises 172 residues: RNA pyrophosphohydrolase (172 aa).

The region spanning 6 to 149 (GFRANVGIII…KRDVYRKVMK (144 aa)) is the Nudix hydrolase domain. The Nudix box motif lies at 38-59 (GGVDEGETPEEAMFRELYEEVG).

Belongs to the Nudix hydrolase family. RppH subfamily. Requires a divalent metal cation as cofactor.

Its function is as follows. Accelerates the degradation of transcripts by removing pyrophosphate from the 5'-end of triphosphorylated RNA, leading to a more labile monophosphorylated state that can stimulate subsequent ribonuclease cleavage. This Shewanella sediminis (strain HAW-EB3) protein is RNA pyrophosphohydrolase.